Here is a 269-residue protein sequence, read N- to C-terminus: MANYIVGDIQGCFDELQQLLKQAEFNSQLDTLWFAGDLVARGPKSLETLRFVYQLGDAARVVLGNHDLHLLSVALGHHSAKRRDQTQAVLDAPDAAPLLDWLRQQPLLAEHQEFVLCHAGISPQWDLATARQAAQEVESVLRSPEWSTLIEQMYSDQPDAWHPTLQGIDRLRYIVNAFTRMRFCFPDGRLDMQCKLPPKEVTDGSLLPWFQLPQRIALEKTVIFGHWAALEGYVSETVIGLDTGCVWGGTLTMLRWEDKHYFSQAALPA.

Belongs to the Ap4A hydrolase family.

It catalyses the reaction P(1),P(4)-bis(5'-adenosyl) tetraphosphate + H2O = 2 ADP + 2 H(+). Functionally, hydrolyzes diadenosine 5',5'''-P1,P4-tetraphosphate to yield ADP. The protein is Bis(5'-nucleosyl)-tetraphosphatase, symmetrical of Vibrio cholerae serotype O1 (strain ATCC 39541 / Classical Ogawa 395 / O395).